The chain runs to 152 residues: SKP1-like protein 10 (152 aa).

Residues 94–152 are interaction with the F-box domain of F-box proteins; that stretch reads IMAANYLNIKSLLDLACQTVADMIKDNTVEHTRKFFNIENDYTHEEEEAVRRENQWGFE.

It belongs to the SKP1 family. As to quaternary structure, part of a SCF (SKP1-cullin-F-box) protein ligase complex. Interacts with CPR1/CPR30. As to expression, expressed in young seedlings, roots, leaves, floral stems, inflorescences, and siliques.

Its subcellular location is the nucleus. Its pathway is protein modification; protein ubiquitination. In terms of biological role, involved in ubiquitination and subsequent proteasomal degradation of target proteins. Together with CUL1, RBX1 and a F-box protein, it forms a SCF E3 ubiquitin ligase complex. The functional specificity of this complex depends on the type of F-box protein. In the SCF complex, it serves as an adapter that links the F-box protein to CUL1. In Arabidopsis thaliana (Mouse-ear cress), this protein is SKP1-like protein 10 (ASK10).